Reading from the N-terminus, the 111-residue chain is Large ribosomal subunit protein uL22 (111 aa).

This sequence belongs to the universal ribosomal protein uL22 family. Part of the 50S ribosomal subunit.

In terms of biological role, this protein binds specifically to 23S rRNA; its binding is stimulated by other ribosomal proteins, e.g. L4, L17, and L20. It is important during the early stages of 50S assembly. It makes multiple contacts with different domains of the 23S rRNA in the assembled 50S subunit and ribosome. Functionally, the globular domain of the protein is located near the polypeptide exit tunnel on the outside of the subunit, while an extended beta-hairpin is found that lines the wall of the exit tunnel in the center of the 70S ribosome. The sequence is that of Large ribosomal subunit protein uL22 from Francisella philomiragia subsp. philomiragia (strain ATCC 25017 / CCUG 19701 / FSC 153 / O#319-036).